Consider the following 1165-residue polypeptide: MRVVVNAKALEVPVGMSFTEWTRTLSPGSSPRFLAWNPVRPRTFKDVTDPFWNGKVFDLLGVVNGKDDLLFPASEIQEWLEYAPNVDLAELERIFVATHRHRGMMGFAAAVQDSLVHVDPDSVDVTRVKDGLHKELDEHASKAAATDVRLKRLRSVKPVDGFSDPVLIRTVFSVTVPEFGDRTAYEIVDSAVPTGSCPYISAGPFVKTIPGFKPAPEWPAQTAHAEGAVFFKADAEFPDTKPLKDMYRKYSGAAVVPGDVTYPAVITFDVPQGSRHVPPEDFAARVAESLSLDLRGRPLVEMGRVVSVRLDGMRFRPYVLTDLLVSDPDASHVMQTDELNRAHKIKGTVYAQVCGTGQTVSFQEKTDEDSGEAYISLRVRARDRKGVEELMEAAGRVMAIYSRRESEIVSFYALYDKTVAKEAAPPRPPRKSKAPEPTGDKADRKLLRTLAPDIFLPTYSRKCLHMPVILRGAELEDARKKGLNLMDFPLFGESERLTYACKHPQHPYPGLRANLLPNKAKYPFVPCCYSKDQAVRPNSKWTAYTTGNAEARRQGRIREGVMQAEPLPEGALIFLRRVLGQETGSKFFALRTTGVPETPVNAVHVAVFQRSLTAEEQAEERAAMALDPSAMGACAQELYVEPDVDWDRWRREMGDPNVPFNLLKYFRALETRYDCDIYIMDNKGIIHTKAVRGRLRYRSRRPTVILHLREESCVPVMTPPSDWTRGPVRNGILTFSPIDPITVKLHDLYQDSRPVYVDGVRVPPLRSDWLPCSGQVVDRAGKARVFVVTPTGKMSRGSFTLVTWPMPPLAAPILRTDTGFPRGRSDSPLSFLGSRFVPSGYRRSVETGAIREITGILDGACEACLLTHDPVLVPDPSWSDGGPPVYEDPVPSRALEGFTGAEKKARMLVEYAKKAISIREGSCTQESVRSFAANGGFVVSPGALDGMKVFNPRFEAPGPFAEADWAVKVPDVKTARRLVYALRVASVNGTCPVQEYASASLVPNFYKTSTDFVQSPAYTINVWRNDLDQSAVKKTRRAVVDWERGLAVPWPLPETELGFSYSLRFAGISRTFMAMNHPTWESAAFAALTWAKSGYCPGVTSNQIPEGEKVPTYACVKGMKPAKVLESGDGTLKLDKSSYGDVRVSGVMIYRASEGKPMQYVSLLM.

Residues 422 to 442 (EAAPPRPPRKSKAPEPTGDKA) form a disordered region.

This is an uncharacterized protein from Frog virus 3 (isolate Goorha) (FV-3).